The primary structure comprises 74 residues: Serine rich endogenous peptide 16 (74 aa).

The signal sequence occupies residues 1–31; the sequence is MATKISHLVSLLLSLLLLLLFISSQVGFTEA. The interval 29-74 is disordered; the sequence is TEAKRDERKKMSSPPIPSPLIPSPPIPPPPPRFYVPPSKSRRGKGP. The span at 42 to 62 shows a compositional bias: pro residues; that stretch reads PPIPSPLIPSPPIPPPPPRFY. An SCOOP motif motif is present at residues 60–74; the sequence is RFYVPPSKSRRGKGP. A SxS motif essential for MIK2 binding motif is present at residues 66–68; the sequence is SKS.

Belongs to the serine rich endogenous peptide (SCOOP) phytocytokine family. In terms of assembly, interacts with MIK2 (via extracellular leucine-rich repeat domain); this interaction triggers the formation of complex between MIK2 and the BAK1/SERK3 and SERK4 coreceptors, and subsequent BAK1 activation by phosphorylation.

It localises to the cell membrane. Its subcellular location is the secreted. The protein localises to the extracellular space. The protein resides in the apoplast. Functionally, brassicaceae-specific phytocytokine (plant endogenous peptide released into the apoplast) perceived by MIK2 in a BAK1/SERK3 and SERK4 coreceptors-dependent manner, that modulates various physiological and antimicrobial processes including growth prevention and reactive oxygen species (ROS) response regulation. In Arabidopsis thaliana (Mouse-ear cress), this protein is Serine rich endogenous peptide 16.